A 259-amino-acid polypeptide reads, in one-letter code: Acyl-[acyl-carrier-protein]--UDP-N-acetylglucosamine O-acyltransferase (259 aa).

It belongs to the transferase hexapeptide repeat family. LpxA subfamily. As to quaternary structure, homotrimer.

It localises to the cytoplasm. It catalyses the reaction a (3R)-hydroxyacyl-[ACP] + UDP-N-acetyl-alpha-D-glucosamine = a UDP-3-O-[(3R)-3-hydroxyacyl]-N-acetyl-alpha-D-glucosamine + holo-[ACP]. It functions in the pathway glycolipid biosynthesis; lipid IV(A) biosynthesis; lipid IV(A) from (3R)-3-hydroxytetradecanoyl-[acyl-carrier-protein] and UDP-N-acetyl-alpha-D-glucosamine: step 1/6. Functionally, involved in the biosynthesis of lipid A, a phosphorylated glycolipid that anchors the lipopolysaccharide to the outer membrane of the cell. This Psychrobacter cryohalolentis (strain ATCC BAA-1226 / DSM 17306 / VKM B-2378 / K5) protein is Acyl-[acyl-carrier-protein]--UDP-N-acetylglucosamine O-acyltransferase.